The sequence spans 215 residues: ATP phosphoribosyltransferase (215 aa).

It belongs to the ATP phosphoribosyltransferase family. Short subfamily. Heteromultimer composed of HisG and HisZ subunits.

Its subcellular location is the cytoplasm. The enzyme catalyses 1-(5-phospho-beta-D-ribosyl)-ATP + diphosphate = 5-phospho-alpha-D-ribose 1-diphosphate + ATP. It participates in amino-acid biosynthesis; L-histidine biosynthesis; L-histidine from 5-phospho-alpha-D-ribose 1-diphosphate: step 1/9. Functionally, catalyzes the condensation of ATP and 5-phosphoribose 1-diphosphate to form N'-(5'-phosphoribosyl)-ATP (PR-ATP). Has a crucial role in the pathway because the rate of histidine biosynthesis seems to be controlled primarily by regulation of HisG enzymatic activity. The protein is ATP phosphoribosyltransferase of Acidithiobacillus ferrooxidans (strain ATCC 23270 / DSM 14882 / CIP 104768 / NCIMB 8455) (Ferrobacillus ferrooxidans (strain ATCC 23270)).